The chain runs to 718 residues: Polyribonucleotide nucleotidyltransferase (718 aa).

The Mg(2+) site is built by Asp497 and Asp503. The 60-residue stretch at 564-623 (PRLLTLKIEPEHIGMVIGPGGKTIKGITEQTSCKIDIADDGTVTIASSEGERAERARQMI) folds into the KH domain. In terms of domain architecture, S1 motif spans 633 to 701 (GEVYLGRVTR…SKGRLNLTRL (69 aa)).

This sequence belongs to the polyribonucleotide nucleotidyltransferase family. In terms of assembly, interacts with RNase E (rne). Mg(2+) is required as a cofactor.

The protein localises to the cytoplasm. It catalyses the reaction RNA(n+1) + phosphate = RNA(n) + a ribonucleoside 5'-diphosphate. Its function is as follows. Involved in mRNA degradation. Catalyzes the phosphorolysis of single-stranded polyribonucleotides processively in the 3'- to 5'-direction. This chain is Polyribonucleotide nucleotidyltransferase, found in Synechocystis sp. (strain ATCC 27184 / PCC 6803 / Kazusa).